A 189-amino-acid polypeptide reads, in one-letter code: Thermostable direct hemolysin (189 aa).

The N-terminal stretch at 1-24 (MKYRHLAKKSFLFIFMLAAFKTFA) is a signal peptide. Cysteine 175 and cysteine 185 are joined by a disulfide.

The protein belongs to the TDH hemolysin family. As to quaternary structure, homodimer.

Its function is as follows. Bacterial hemolysins are exotoxins that attack blood cell membranes and cause cell rupture by mechanisms not clearly defined. In Grimontia hollisae (Vibrio hollisae), this protein is Thermostable direct hemolysin (tdh).